We begin with the raw amino-acid sequence, 795 residues long: Myosin light chain kinase 3 (795 aa).

At Ser-155 the chain carries Phosphoserine. 2 disordered regions span residues 236–257 and 305–328; these read GPGQ…ASEN and SSGP…GDAL. Phosphoserine is present on residues Ser-351 and Ser-432. Residues 367 to 452 are disordered; that stretch reads DQIPKGARPF…GPGRTEAGRL (86 aa). Residues 491-746 form the Protein kinase domain; that stretch reads VSQHEVLGGG…ATQCLKHEWL (256 aa). Residues 497 to 505 and Lys-520 contribute to the ATP site; that span reads LGGGRFGQV. The active-site Proton acceptor is Asp-612.

Belongs to the protein kinase superfamily. CAMK Ser/Thr protein kinase family. Mg(2+) is required as a cofactor. Post-translationally, phosphorylated on serine residues. In terms of tissue distribution, restricted to cardiomyocytes (at protein level). Down-regulated in heart after experimental myocardial infarction at the protein level; no significant changes at the mRNA level.

Its subcellular location is the cytoplasm. The enzyme catalyses L-seryl-[myosin light chain] + ATP = O-phospho-L-seryl-[myosin light chain] + ADP + H(+). The catalysed reaction is L-threonyl-[myosin light chain] + ATP = O-phospho-L-threonyl-[myosin light chain] + ADP + H(+). Its function is as follows. Kinase that phosphorylates MYL2 in vitro. Has been proposed to be calmodulin-dependent, although MYL2 phosphorylation has also been observed in the presence or absence of calmodulin. Promotes sarcomere formation in cardiomyocytes and increases cardiomyocyte contractility. This chain is Myosin light chain kinase 3 (Mylk3), found in Mus musculus (Mouse).